We begin with the raw amino-acid sequence, 275 residues long: Protein CIMAP1C (275 aa).

2 STPGR repeats span residues 200–225 (PGPA…MAKR) and 236–261 (PGPG…MGIK).

It belongs to the CIMAP family.

The protein is Protein CIMAP1C (CIMAP1C) of Mus musculus (Mouse).